The chain runs to 488 residues: NADH-quinone oxidoreductase subunit N (488 aa).

Helical transmembrane passes span 15 to 35, 42 to 62, 79 to 99, 108 to 128, 133 to 153, 168 to 188, 209 to 229, 243 to 263, 277 to 297, 305 to 325, 333 to 353, 376 to 396, 409 to 429, and 456 to 476; these read LALP…VDLY, GMTF…AIVA, NLAA…FAYC, LLKG…MIMA, LMTV…MVAF, FVLG…IYGA, WLLL…FGAV, PTTV…ALFV, WQPM…LAAL, MLAY…IAGT, LFYA…IILL, MALM…TVGF, VGLV…AFYY, and GLLV…DSLI.

The protein belongs to the complex I subunit 2 family. NDH-1 is composed of 14 different subunits. Subunits NuoA, H, J, K, L, M, N constitute the membrane sector of the complex.

The protein localises to the cell inner membrane. The enzyme catalyses a quinone + NADH + 5 H(+)(in) = a quinol + NAD(+) + 4 H(+)(out). In terms of biological role, NDH-1 shuttles electrons from NADH, via FMN and iron-sulfur (Fe-S) centers, to quinones in the respiratory chain. The immediate electron acceptor for the enzyme in this species is believed to be ubiquinone. Couples the redox reaction to proton translocation (for every two electrons transferred, four hydrogen ions are translocated across the cytoplasmic membrane), and thus conserves the redox energy in a proton gradient. This is NADH-quinone oxidoreductase subunit N from Alkalilimnicola ehrlichii (strain ATCC BAA-1101 / DSM 17681 / MLHE-1).